The chain runs to 56 residues: Alpha-pompilidotoxin (56 aa).

An N-terminal signal peptide occupies residues 1–22; sequence MFKQLILLALAAVFLLINISSA. Positions 23–42 are excised as a propeptide; sequence EPAAEPNANAEPLAEASAEP. Residue L55 is modified to Leucine amide.

As to expression, expressed by the venom gland.

It is found in the secreted. In terms of biological role, inhibits sodium channels (Nav) inactivation. Shows two types of inhibitory activities on channels. Inhibition of hNav1.6/SCN8A shows a large increase in the steady-state current component without any increase in the slow component, whereas inhibition of hNav1.1/SCN1A, hNav1.2/SCN2A, hNav1.3/SCN3A and hNav1.7/SCN9A shows a large increase in the slow component with only a small steady-state component. Is 5-fold less potent than beta-PMTX for inducing repetitive action potentials in lobster neuromuscular junctions. The sequence is that of Alpha-pompilidotoxin from Anoplius samariensis (Solitary wasp).